A 406-amino-acid polypeptide reads, in one-letter code: 11-beta-hydroxysteroid dehydrogenase type 2 (406 aa).

82–111 (TRAVLITGCDSGFGKETAKKLDAMGFTVLA) is a binding site for NAD(+). S219 contacts substrate. Y232 serves as the catalytic Proton acceptor. A disordered region spans residues 379–406 (GQPGATPAPDTAQDNPNPNPDPSLVGAR).

This sequence belongs to the short-chain dehydrogenases/reductases (SDR) family. As to quaternary structure, interacts with ligand-free cytoplasmic NR3C2. As to expression, highly expressed in the kidney.

The protein localises to the microsome. Its subcellular location is the endoplasmic reticulum. The enzyme catalyses an 11beta-hydroxysteroid + NAD(+) = an 11-oxosteroid + NADH + H(+). It catalyses the reaction corticosterone + NAD(+) = 11-dehydrocorticosterone + NADH + H(+). It carries out the reaction cortisol + NAD(+) = cortisone + NADH + H(+). The catalysed reaction is 11beta,17beta-dihydroxyandrost-4-ene-3-one + NAD(+) = 17beta-hydroxyandrost-4-ene-3,11-dione + NADH + H(+). The enzyme catalyses 11beta-hydroxyandrost-4-ene-3,17-dione + NAD(+) = androst-4-ene-3,11,17-trione + NADH + H(+). Its pathway is steroid metabolism. With respect to regulation, inhibited by carbenoloxone. Its function is as follows. Catalyzes the conversion of biologically active 11beta-hydroxyglucocorticoids (11beta-hydroxysteroid) such as corticosterone, to inactive 11-ketoglucocorticoids (11-oxosteroid) such as 11-dehydrocorticosterone, in the presence of NAD(+). Functions as a dehydrogenase (oxidase), thereby decreasing the concentration of active glucocorticoids, thus protecting the nonselective mineralocorticoid receptor from occupation by glucocorticoids. Plays an important role in maintaining glucocorticoids balance during preimplantation and protects the fetus from excessive maternal corticosterone exposure. Catalyzes the oxidation of 11beta-hydroxytestosterone (11beta,17beta-dihydroxyandrost-4-ene-3-one) to 11-ketotestosterone (17beta-hydroxyandrost-4-ene-3,11-dione), a major bioactive androgen. Catalyzes the conversion of 11beta-hydroxyandrostenedione (11beta-hydroxyandrost-4-ene-3,17-dione) to 11-ketoandrostenedione (androst-4-ene-3,11,17-trione), which can be further metabolized to 11-ketotestosterone. Converts 7-beta-25-dihydroxycholesterol to 7-oxo-25-hydroxycholesterol in vitro. 7-beta-25-dihydroxycholesterol (not 7-oxo-25-hydroxycholesterol) acts as a ligand for the G-protein-coupled receptor (GPCR) Epstein-Barr virus-induced gene 2 (EBI2) and may thereby regulate immune cell migration. May protect ovulating oocytes and fertilizing spermatozoa from the adverse effects of cortisol. This is 11-beta-hydroxysteroid dehydrogenase type 2 (HSD11B2) from Oryctolagus cuniculus (Rabbit).